A 142-amino-acid chain; its full sequence is Nucleoside diphosphate kinase (142 aa).

ATP is bound by residues Lys11, Phe59, Arg87, Thr93, Arg104, and Asn114. The active-site Pros-phosphohistidine intermediate is His117.

This sequence belongs to the NDK family. As to quaternary structure, homotetramer. The cofactor is Mg(2+).

The protein localises to the cytoplasm. The enzyme catalyses a 2'-deoxyribonucleoside 5'-diphosphate + ATP = a 2'-deoxyribonucleoside 5'-triphosphate + ADP. It carries out the reaction a ribonucleoside 5'-diphosphate + ATP = a ribonucleoside 5'-triphosphate + ADP. Its function is as follows. Major role in the synthesis of nucleoside triphosphates other than ATP. The ATP gamma phosphate is transferred to the NDP beta phosphate via a ping-pong mechanism, using a phosphorylated active-site intermediate. The polypeptide is Nucleoside diphosphate kinase (Pectobacterium carotovorum subsp. carotovorum (strain PC1)).